Here is a 346-residue protein sequence, read N- to C-terminus: Beta-hexosaminidase (346 aa).

Residues aspartate 62, arginine 70, arginine 134, and 164-165 contribute to the substrate site; that span reads KH. Histidine 177 serves as the catalytic Proton donor/acceptor. Catalysis depends on aspartate 249, which acts as the Nucleophile.

Belongs to the glycosyl hydrolase 3 family. NagZ subfamily.

The protein localises to the cytoplasm. It carries out the reaction Hydrolysis of terminal non-reducing N-acetyl-D-hexosamine residues in N-acetyl-beta-D-hexosaminides.. It participates in cell wall biogenesis; peptidoglycan recycling. In terms of biological role, plays a role in peptidoglycan recycling by cleaving the terminal beta-1,4-linked N-acetylglucosamine (GlcNAc) from peptide-linked peptidoglycan fragments, giving rise to free GlcNAc, anhydro-N-acetylmuramic acid and anhydro-N-acetylmuramic acid-linked peptides. This chain is Beta-hexosaminidase, found in Actinobacillus succinogenes (strain ATCC 55618 / DSM 22257 / CCUG 43843 / 130Z).